The chain runs to 109 residues: Nascent polypeptide-associated complex protein (109 aa).

Positions 3–70 (PMNPKQMKKM…YEVVKRPPKI (68 aa)) constitute an NAC-A/B domain.

Belongs to the NAC-alpha family. Homodimer. Interacts with the ribosome. Binds ribosomal RNA.

Its function is as follows. Contacts the emerging nascent chain on the ribosome. In Archaeoglobus fulgidus (strain ATCC 49558 / DSM 4304 / JCM 9628 / NBRC 100126 / VC-16), this protein is Nascent polypeptide-associated complex protein.